The primary structure comprises 236 residues: (5-formylfuran-3-yl)methyl phosphate synthase (236 aa).

Residue lysine 27 is the Schiff-base intermediate with substrate of the active site. The active-site Proton acceptor is lysine 85.

Belongs to the MfnB family.

It carries out the reaction 2 D-glyceraldehyde 3-phosphate = 4-(hydroxymethyl)-2-furancarboxaldehyde phosphate + phosphate + 2 H2O. It participates in cofactor biosynthesis; methanofuran biosynthesis. In terms of biological role, catalyzes the formation of 4-(hydroxymethyl)-2-furancarboxaldehyde phosphate (4-HFC-P) from two molecules of glyceraldehyde-3-P (GA-3-P). This is (5-formylfuran-3-yl)methyl phosphate synthase from Methanococcus maripaludis (strain DSM 14266 / JCM 13030 / NBRC 101832 / S2 / LL).